Here is a 561-residue protein sequence, read N- to C-terminus: ATP-dependent rRNA helicase RRP3 (561 aa).

2 stretches are compositionally biased toward low complexity: residues 1–23 (MPKASASSAKMTASTSNVSSSNS) and 30–45 (ASSPSASPEVSTPSTS). Positions 1–109 (MPKASASSAK…DEKKVATIAD (109 aa)) are disordered. The segment covering 100–109 (DEKKVATIAD) has biased composition (basic and acidic residues). The Q motif signature appears at 114-142 (VEFSDLGVIPQIVEACTNMGFKHPTPIQV). One can recognise a Helicase ATP-binding domain in the interval 145-316 (IPEALQARDV…RASLKNPVRV (172 aa)). Residue 158–165 (AQTGSGKT) participates in ATP binding. The short motif at 264–267 (DEAD) is the DEAD box element. The Helicase C-terminal domain maps to 339-487 (HKDTYLVHLA…EFPGGNDKEA (149 aa)). Residues 506 to 561 (LKDKGVGSAGGSGKRKRKMDGKYGDDMDRDDDQVQAGLPVSGNGRHQNQNRKKGRR) are disordered.

The protein belongs to the DEAD box helicase family. DDX47/RRP3 subfamily. As to quaternary structure, interacts with the SSU processome.

It localises to the nucleus. It catalyses the reaction ATP + H2O = ADP + phosphate + H(+). ATP-dependent rRNA helicase required for pre-ribosomal RNA processing. Involved in the maturation of the 35S-pre-rRNA and to its cleavage to mature 18S rRNA. The chain is ATP-dependent rRNA helicase RRP3 from Mycosarcoma maydis (Corn smut fungus).